Reading from the N-terminus, the 128-residue chain is ATP synthase epsilon chain (128 aa).

The tract at residues 98-128 (EALDMPSSTPEQAQIKDAAVRRARGQLRASR) is disordered. The segment covering 118–128 (RRARGQLRASR) has biased composition (basic residues).

Belongs to the ATPase epsilon chain family. In terms of assembly, F-type ATPases have 2 components, CF(1) - the catalytic core - and CF(0) - the membrane proton channel. CF(1) has five subunits: alpha(3), beta(3), gamma(1), delta(1), epsilon(1). CF(0) has three main subunits: a, b and c.

Its subcellular location is the cell inner membrane. Its function is as follows. Produces ATP from ADP in the presence of a proton gradient across the membrane. The chain is ATP synthase epsilon chain from Rhodopirellula baltica (strain DSM 10527 / NCIMB 13988 / SH1).